A 122-amino-acid chain; its full sequence is MARLAGVDLPREKRMEVALTYIFGIGPARSKELLEKTGISPDLRSKDLSDEQLAALRDVIENNWKVEGDLRREIQADIRRKIEIGSYQGLRHRRGLPVRGQRTKTNARTRKGPKKTIAGKKK.

Positions 93–122 (RRGLPVRGQRTKTNARTRKGPKKTIAGKKK) are disordered.

The protein belongs to the universal ribosomal protein uS13 family. In terms of assembly, part of the 30S ribosomal subunit. Forms a loose heterodimer with protein S19. Forms two bridges to the 50S subunit in the 70S ribosome.

Functionally, located at the top of the head of the 30S subunit, it contacts several helices of the 16S rRNA. In the 70S ribosome it contacts the 23S rRNA (bridge B1a) and protein L5 of the 50S subunit (bridge B1b), connecting the 2 subunits; these bridges are implicated in subunit movement. Contacts the tRNAs in the A and P-sites. This is Small ribosomal subunit protein uS13 from Corynebacterium urealyticum (strain ATCC 43042 / DSM 7109).